Consider the following 1153-residue polypeptide: PPi-type phosphoenolpyruvate carboxykinase 3 (1153 aa).

Residues 1085 to 1131 (RQKLEVAKLNKDLAYLNKTIAEKPRLAETLNKQIAAVKEELQYVSSE) are a coiled coil.

Belongs to the PPi-type phosphoenolpyruvate carboxykinase family. Monomer and trimer; forms heterotrimers with PEPCK1 and PEPCK2.

It localises to the cytoplasm. The protein resides in the cytosol. It catalyses the reaction oxaloacetate + diphosphate = phosphoenolpyruvate + phosphate + CO2. Inorganic pyrophosphate (PPi)-dependent phosphoenolpyruvate carboxykinase, which regulates the carbon flow of the central metabolism by fixing CO(2) to phosphoenolpyruvate to produce oxaloacetate. Can also produce pyruvate and diphosphate from phosphoenolpyruvate and phosphate. The protein is PPi-type phosphoenolpyruvate carboxykinase 3 of Entamoeba histolytica (strain ATCC 30459 / HM-1:IMSS / ABRM).